A 599-amino-acid chain; its full sequence is Adenine deaminase (599 aa).

This sequence belongs to the metallo-dependent hydrolases superfamily. Adenine deaminase family. The cofactor is Mn(2+).

The catalysed reaction is adenine + H2O + H(+) = hypoxanthine + NH4(+). In Clostridium botulinum (strain 657 / Type Ba4), this protein is Adenine deaminase.